The sequence spans 398 residues: Succinate--CoA ligase [ADP-forming] subunit beta (398 aa).

One can recognise an ATP-grasp domain in the interval 9 to 254; that stretch reads KALLKSYGAP…TTEEDEKEIE (246 aa). ATP-binding positions include K46, 53-55, E109, A112, and E117; that span reads GRG. Positions 209 and 223 each coordinate Mg(2+). Substrate is bound by residues N274 and 331–333; that span reads GIM.

It belongs to the succinate/malate CoA ligase beta subunit family. Heterotetramer of two alpha and two beta subunits. The cofactor is Mg(2+).

The enzyme catalyses succinate + ATP + CoA = succinyl-CoA + ADP + phosphate. It carries out the reaction GTP + succinate + CoA = succinyl-CoA + GDP + phosphate. It functions in the pathway carbohydrate metabolism; tricarboxylic acid cycle; succinate from succinyl-CoA (ligase route): step 1/1. In terms of biological role, succinyl-CoA synthetase functions in the citric acid cycle (TCA), coupling the hydrolysis of succinyl-CoA to the synthesis of either ATP or GTP and thus represents the only step of substrate-level phosphorylation in the TCA. The beta subunit provides nucleotide specificity of the enzyme and binds the substrate succinate, while the binding sites for coenzyme A and phosphate are found in the alpha subunit. The polypeptide is Succinate--CoA ligase [ADP-forming] subunit beta (Sinorhizobium medicae (strain WSM419) (Ensifer medicae)).